The chain runs to 140 residues: Large ribosomal subunit protein uL11 (140 aa).

The protein belongs to the universal ribosomal protein uL11 family. Part of the ribosomal stalk of the 50S ribosomal subunit. Interacts with L10 and the large rRNA to form the base of the stalk. L10 forms an elongated spine to which L12 dimers bind in a sequential fashion forming a multimeric L10(L12)X complex. Post-translationally, one or more lysine residues are methylated.

Its function is as follows. Forms part of the ribosomal stalk which helps the ribosome interact with GTP-bound translation factors. The chain is Large ribosomal subunit protein uL11 from Lawsonia intracellularis (strain PHE/MN1-00).